An 837-amino-acid polypeptide reads, in one-letter code: Ribosome biogenesis ATPase RIX7 (837 aa).

Disordered regions lie at residues 36-56 (RSLR…EEDE) and 149-207 (ITST…LKSL). Position 42 is a phosphoserine (Ser42). Over residues 43–56 (QGEEGENNEGEEDE) the composition is skewed to acidic residues. Residues 149–163 (ITSTWSKSGSVSESI) show a composition bias toward polar residues. Over residues 176-192 (KSKKRSKEGTCKVKRQK) the composition is skewed to basic residues. An ATP-binding site is contributed by 246-253 (GPPGCGKT). Residues 443–468 (PTTATDSSEDNMEIDETANGDESSLK) form a disordered region. Residues 449–461 (SSEDNMEIDETAN) show a composition bias toward acidic residues. 574 to 581 (GPPGCGKT) serves as a coordination point for ATP.

The protein belongs to the AAA ATPase family.

It localises to the nucleus. It is found in the nucleolus. Its function is as follows. Involved in ribosome biogenesis. Seems to be required for restructuring nucleoplasmic 60S pre-ribosomal particles to make them competent for nuclear export. The chain is Ribosome biogenesis ATPase RIX7 (RIX7) from Saccharomyces cerevisiae (strain ATCC 204508 / S288c) (Baker's yeast).